The sequence spans 498 residues: Protein DETOXIFICATION 30 (498 aa).

A run of 12 helical transmembrane segments spans residues 64–86, 91–111, 136–156, 161–181, 197–217, 227–247, 277–297, 302–322, 349–369, 393–413, 419–439, and 447–467; these read YSLGAATQVFAGHISTIALAAVS, VIAGFSFGVMLGMGSALETLC, VTAVILSLLYIFAAPILAFIG, ISSATGIFSIYMIPQIFAYAV, VMAAISAVALVLHVLLTWFVI, LAVVLNASWWFIVVAQLVYIF, AVMLCLEVWYLMAVILFAGYL, ISVAALSICMNILGWTAMIAI, LVAVITSTVIGLAISIALLIF, ILAVSIVINNVQPVLSGVAVG, VVAYVNIVCYYVFGIPFGLLL, and VMGIWCGMLTGTVVQTIVLTW.

Belongs to the multi antimicrobial extrusion (MATE) (TC 2.A.66.1) family.

It localises to the membrane. This Arabidopsis thaliana (Mouse-ear cress) protein is Protein DETOXIFICATION 30.